The sequence spans 183 residues: Translation initiation factor IF-3 (183 aa).

Belongs to the IF-3 family. As to quaternary structure, monomer.

It is found in the cytoplasm. Functionally, IF-3 binds to the 30S ribosomal subunit and shifts the equilibrium between 70S ribosomes and their 50S and 30S subunits in favor of the free subunits, thus enhancing the availability of 30S subunits on which protein synthesis initiation begins. This chain is Translation initiation factor IF-3, found in Pseudomonas entomophila (strain L48).